Here is a 119-residue protein sequence, read N- to C-terminus: Putative phosphoethanolamine transferase YjgX (119 aa).

2 helical membrane-spanning segments follow: residues 5–25 (VFPVYHFLVSAAILVFVVIFW) and 94–114 (LLLSLVRVCAGIICQCMTIPY).

This sequence belongs to the phosphoethanolamine transferase family.

It is found in the cell inner membrane. The sequence is that of Putative phosphoethanolamine transferase YjgX (yjgX) from Escherichia coli (strain K12).